Reading from the N-terminus, the 438-residue chain is Trigger factor (438 aa).

Residues 163–248 (GDIITIDYEG…VKEIKRKELA (86 aa)) enclose the PPIase FKBP-type domain.

This sequence belongs to the FKBP-type PPIase family. Tig subfamily.

It localises to the cytoplasm. The catalysed reaction is [protein]-peptidylproline (omega=180) = [protein]-peptidylproline (omega=0). Functionally, involved in protein export. Acts as a chaperone by maintaining the newly synthesized protein in an open conformation. Functions as a peptidyl-prolyl cis-trans isomerase. The protein is Trigger factor of Desulforudis audaxviator (strain MP104C).